Here is a 223-residue protein sequence, read N- to C-terminus: MQLKPMEINPEMLNKVLTRLGVGGDWKFVDVLGLEEDVLGTVPAPACALLLLFPLTAQHENFRKKQIEELKGQEVSPKVYFMKQTVGNSCGTIGLIHAVANNQDKLNFDDGSVLKQFISETAKLSPEDRAKCFEKNEAIQAAHDAVAQEGQCRVDDEVNFHFILFNNVDGHLYELDGRMPFPINHGSNSDESVLKGAAEICRQFTEREEGEVRFSAVALCKCA.

Residue Met-1 is modified to N-acetylmethionine. The region spanning 2–221 (QLKPMEINPE…VRFSAVALCK (220 aa)) is the UCH catalytic domain. Positions 5-10 (PMEINP) are interaction with ubiquitin. Cys-90 acts as the Nucleophile in catalysis. At Ser-125 the chain carries Phosphoserine. The Proton donor role is filled by His-161. The segment at 211–216 (EVRFSA) is interaction with ubiquitin. Cys-220 is lipidated: S-farnesyl cysteine. Positions 221-223 (KCA) are cleaved as a propeptide — removed in mature form.

It belongs to the peptidase C12 family. In terms of assembly, monomer. Homodimer. Interacts with COPS5 and SNCA. Post-translationally, O-glycosylated.

The protein localises to the cytoplasm. It is found in the endoplasmic reticulum membrane. The catalysed reaction is Thiol-dependent hydrolysis of ester, thioester, amide, peptide and isopeptide bonds formed by the C-terminal Gly of ubiquitin (a 76-residue protein attached to proteins as an intracellular targeting signal).. In terms of biological role, ubiquitin-protein hydrolase involved both in the processing of ubiquitin precursors and of ubiquitinated proteins. This enzyme is a thiol protease that recognizes and hydrolyzes a peptide bond at the C-terminal glycine of ubiquitin. Also binds to free monoubiquitin and may prevent its degradation in lysosomes. The homodimer may have ATP-independent ubiquitin ligase activity. The polypeptide is Ubiquitin carboxyl-terminal hydrolase isozyme L1 (UCHL1) (Monodelphis domestica (Gray short-tailed opossum)).